The sequence spans 154 residues: Ribosomal RNA large subunit methyltransferase H (154 aa).

Residues G103 and 122-127 (FSKLTF) each bind S-adenosyl-L-methionine.

It belongs to the RNA methyltransferase RlmH family. As to quaternary structure, homodimer.

The protein localises to the cytoplasm. The enzyme catalyses pseudouridine(1915) in 23S rRNA + S-adenosyl-L-methionine = N(3)-methylpseudouridine(1915) in 23S rRNA + S-adenosyl-L-homocysteine + H(+). Its function is as follows. Specifically methylates the pseudouridine at position 1915 (m3Psi1915) in 23S rRNA. The protein is Ribosomal RNA large subunit methyltransferase H of Caldicellulosiruptor saccharolyticus (strain ATCC 43494 / DSM 8903 / Tp8T 6331).